The sequence spans 718 residues: Catalase-peroxidase (718 aa).

Residues 98–219 (WHAAGTYRMG…LAATEMGLIY (122 aa)) constitute a cross-link (tryptophyl-tyrosyl-methioninium (Trp-Tyr) (with M-245)). The active-site Proton acceptor is the histidine 99. The tryptophyl-tyrosyl-methioninium (Tyr-Met) (with W-98) cross-link spans 219–245 (YVNPEGPQASGDPRSAAPFIRATFGNM). Histidine 260 is a binding site for heme b.

This sequence belongs to the peroxidase family. Peroxidase/catalase subfamily. As to quaternary structure, homodimer or homotetramer. It depends on heme b as a cofactor. Post-translationally, formation of the three residue Trp-Tyr-Met cross-link is important for the catalase, but not the peroxidase activity of the enzyme.

The catalysed reaction is H2O2 + AH2 = A + 2 H2O. The enzyme catalyses 2 H2O2 = O2 + 2 H2O. In terms of biological role, bifunctional enzyme with both catalase and broad-spectrum peroxidase activity. In Acinetobacter baumannii (strain ACICU), this protein is Catalase-peroxidase.